Consider the following 685-residue polypeptide: E3 ubiquitin ligase Rnf157 (685 aa).

Gly-2 carries N-myristoyl glycine lipidation. An RING-type zinc finger spans residues Glu-276–Cys-315. The D-box 1 motif lies at Arg-329–Leu-332. 3 disordered regions span residues Ser-339–Pro-361, Leu-433–Gln-584, and Leu-650–Ala-672. Low complexity predominate over residues Ser-434 to Val-443. Residues Glu-478 to Gly-537 are compositionally biased toward polar residues. Residues Pro-552–Pro-561 show a composition bias toward low complexity. Positions Ala-657–Arg-660 match the D-box 2 motif.

Interacts with APBB1. Interacts with CHD1; CHD1-binding controls RNF157 stability. Also interacts with ATRN, MEGF8, TECR, MSI2, PLRG1, BYSL, MTERF3, PSMA1, MRPS18B, PRPF4, FASTKD2, SLC25A1, SMU1, CNOT9, MRPS2, MAGT1, FXR2, EMD, PSMD8, HDAC1, RAN, HSD17B12, TXNDC5 and MRPL19.

The protein localises to the cytoplasm. The enzyme catalyses S-ubiquitinyl-[E2 ubiquitin-conjugating enzyme]-L-cysteine + [acceptor protein]-L-lysine = [E2 ubiquitin-conjugating enzyme]-L-cysteine + N(6)-ubiquitinyl-[acceptor protein]-L-lysine.. E3 ubiquitin ligase that ubiquitinates APBB1 for its degradation by the proteasome and thus prevents apoptosis and promotes survival of neurons. Has a dual role in neurons as it is also required for dendrite growth and maintenance for which its ligase activity is not critical. May act as a scaffold molecule to regulate this process. Acts as a downstream effector of the interconnected PI3K and MAPK signaling pathways and thus participates in the regulation of the cell cycle. The sequence is that of E3 ubiquitin ligase Rnf157 (Rnf157) from Mus musculus (Mouse).